The sequence spans 193 residues: Imidazoleglycerol-phosphate dehydratase (193 aa).

Belongs to the imidazoleglycerol-phosphate dehydratase family.

Its subcellular location is the cytoplasm. It carries out the reaction D-erythro-1-(imidazol-4-yl)glycerol 3-phosphate = 3-(imidazol-4-yl)-2-oxopropyl phosphate + H2O. It participates in amino-acid biosynthesis; L-histidine biosynthesis; L-histidine from 5-phospho-alpha-D-ribose 1-diphosphate: step 6/9. This Saccharolobus islandicus (strain M.16.27) (Sulfolobus islandicus) protein is Imidazoleglycerol-phosphate dehydratase.